The chain runs to 146 residues: MKLHELKPAEGSRKVRNRVGRGIGSGNGKTAGKGHKGQNARSGGGVRLGFEGGQTPLFRRLPKRGFTNINRKEFAIVNLSTLNRFEDGTEVTPELLLETGVISKLNDGVKILASGAVEKKLTVKAHKFSSSAKEAIEAAGGSVEVI.

Over residues 1 to 13 (MKLHELKPAEGSR) the composition is skewed to basic and acidic residues. The disordered stretch occupies residues 1–52 (MKLHELKPAEGSRKVRNRVGRGIGSGNGKTAGKGHKGQNARSGGGVRLGFEG). 2 stretches are compositionally biased toward gly residues: residues 21-31 (RGIGSGNGKTA) and 42-52 (SGGGVRLGFEG).

This sequence belongs to the universal ribosomal protein uL15 family. In terms of assembly, part of the 50S ribosomal subunit.

In terms of biological role, binds to the 23S rRNA. The chain is Large ribosomal subunit protein uL15 from Bacillus anthracis (strain A0248).